The primary structure comprises 483 residues: SET domain and MYND-type zinc finger protein 6 (483 aa).

The SET domain occupies 4 to 228 (PLIASVILPE…KDEQLFISYI (225 aa)). Zn(2+) is bound by residues cysteine 49, cysteine 52, cysteine 62, cysteine 65, cysteine 71, cysteine 75, histidine 83, and cysteine 87. The MYND-type zinc-finger motif lies at 49-87 (CSTCTEEKVKTQRCAACKIIHYCSKGCQKADWPFHKLEC).

This sequence belongs to the class V-like SAM-binding methyltransferase superfamily.

It is found in the cytoplasm. The protein localises to the nucleus. The chain is SET domain and MYND-type zinc finger protein 6 (set6) from Schizosaccharomyces pombe (strain 972 / ATCC 24843) (Fission yeast).